The following is an 81-amino-acid chain: Mipartoxin-1A (81 aa).

Residues 1-21 form the signal peptide; it reads MKTLLLTLVVVTIVCLDLGNS. Disulfide bonds link cysteine 24–cysteine 42, cysteine 35–cysteine 61, cysteine 65–cysteine 73, and cysteine 74–cysteine 79.

The protein belongs to the three-finger toxin family. Short-chain subfamily. Expressed by the venom gland.

It localises to the secreted. Its function is as follows. Snake venom neurotoxin that blocks neuromuscular transmission, presenting a postsynaptic action through the nicotinic acetylcholine receptor (nAChR). Has no cytotoxic activity. This is Mipartoxin-1A from Micrurus mipartitus (Red-tailed coral snake).